We begin with the raw amino-acid sequence, 495 residues long: Leucine aminopeptidase 2 (495 aa).

An N-terminal signal peptide occupies residues 1-21 (MKSQLLSLAVAVSTISQGVVG). In terms of domain architecture, PA spans 124-218 (PPANKIMAEL…EDGKNLASLV (95 aa)). Residues N142 and N235 are each glycosylated (N-linked (GlcNAc...) asparagine). Residues H259 and D271 each coordinate Zn(2+). A glycan (N-linked (GlcNAc...) asparagine) is linked at N272. E303 (proton acceptor) is an active-site residue. Zn(2+) contacts are provided by E304 and D332. Residue N352 is glycosylated (N-linked (GlcNAc...) asparagine). A Zn(2+)-binding site is contributed by H430.

This sequence belongs to the peptidase M28 family. M28A subfamily. In terms of assembly, monomer. It depends on Zn(2+) as a cofactor.

It localises to the secreted. Extracellular aminopeptidase that releases a wide variety of amino acids from natural peptides and contributes to pathogenicity. The chain is Leucine aminopeptidase 2 (LAP2) from Trichophyton equinum (Horse ringworm fungus).